A 516-amino-acid chain; its full sequence is GMP synthase [glutamine-hydrolyzing] (516 aa).

The 197-residue stretch at 7-203 (SVIVLDFGSQ…LIDIAGITPD (197 aa)) folds into the Glutamine amidotransferase type-1 domain. The active-site Nucleophile is Cys-84. Active-site residues include His-177 and Glu-179. The region spanning 204-391 (WSPKSFIQHQ…LGIAEDILMR (188 aa)) is the GMPS ATP-PPase domain. 231–237 (SGGVDST) serves as a coordination point for ATP.

In terms of assembly, homodimer.

It catalyses the reaction XMP + L-glutamine + ATP + H2O = GMP + L-glutamate + AMP + diphosphate + 2 H(+). It participates in purine metabolism; GMP biosynthesis; GMP from XMP (L-Gln route): step 1/1. Functionally, catalyzes the synthesis of GMP from XMP. The polypeptide is GMP synthase [glutamine-hydrolyzing] (Chlorobaculum tepidum (strain ATCC 49652 / DSM 12025 / NBRC 103806 / TLS) (Chlorobium tepidum)).